We begin with the raw amino-acid sequence, 346 residues long: Farnesyl diphosphate synthase 1 (346 aa).

K52, R55, and Q90 together coordinate isopentenyl diphosphate. D97 and D101 together coordinate Mg(2+). The DDXXD motif signature appears at 97–101; that stretch reads DDIMD. R106 is a binding site for dimethylallyl diphosphate. Position 107 (R107) interacts with isopentenyl diphosphate. Dimethylallyl diphosphate-binding residues include K194, T195, and Q233. A DDXXD motif motif is present at residues 236 to 240; sequence DDYLD. The dimethylallyl diphosphate site is built by K250 and K259.

This sequence belongs to the FPP/GGPP synthase family. Mg(2+) is required as a cofactor. Requires Mn(2+) as cofactor. In terms of tissue distribution, highly expressed in shoots.

It catalyses the reaction isopentenyl diphosphate + (2E)-geranyl diphosphate = (2E,6E)-farnesyl diphosphate + diphosphate. The enzyme catalyses isopentenyl diphosphate + dimethylallyl diphosphate = (2E)-geranyl diphosphate + diphosphate. Its pathway is isoprenoid biosynthesis; farnesyl diphosphate biosynthesis; farnesyl diphosphate from geranyl diphosphate and isopentenyl diphosphate: step 1/1. The protein operates within isoprenoid biosynthesis; geranyl diphosphate biosynthesis; geranyl diphosphate from dimethylallyl diphosphate and isopentenyl diphosphate: step 1/1. Catalyzes the sequential condensation of isopentenyl pyrophosphate (IPP) with the allylic pyrophosphates, dimethylallyl pyrophosphate (DMAPP), and then with the resultant geranylpyrophosphate (GPP) to the ultimate product farnesyl pyrophosphate (FPP). Has a 4.5 time greater affinity for GPP versus DMAPP. The protein is Farnesyl diphosphate synthase 1 (FDS-1) of Artemisia spiciformis (Spiked big sagebrush).